A 434-amino-acid polypeptide reads, in one-letter code: Perilipin-3 (434 aa).

A disordered region spans residues 1–22 (MSADGAEADGSTQVTVEEPVQQ). The residue at position 2 (serine 2) is an N-acetylserine. Residue serine 31 is modified to Phosphoserine. Lysine 65 carries the N6-acetyllysine modification. Serine 91 is subject to Phosphoserine. Lysine 122 participates in a covalent cross-link: Glycyl lysine isopeptide (Lys-Gly) (interchain with G-Cter in SUMO1). Phosphoserine is present on residues serine 130 and serine 148. Threonine 170 carries the post-translational modification Phosphothreonine. Phosphoserine is present on residues serine 175 and serine 179. Phosphothreonine is present on threonine 216. 2 positions are modified to phosphoserine: serine 217 and serine 241. A Phosphotyrosine modification is found at tyrosine 251. 2 coiled-coil regions span residues 252-280 (EHSL…SLME) and 353-377 (TNVK…SSIH).

The protein belongs to the perilipin family. Homooligomer. Interacts with M6PR (via the cytoplasmic domain). Interacts with IGF2R (via the cytoplasmic domain). Phosphorylation at Tyr-251 by isoform 1 of CHKA (CHKalpha2) promotes dissociation from lipid droplets: dissociation is followed by recruitment of autophagosome machinery to lipid droplets and subsequent lipid droplet lipolysis.

It is found in the lipid droplet. Its subcellular location is the endosome membrane. The protein localises to the cytoplasm. Structural component of lipid droplets, which is required for the formation and maintenance of lipid storage droplets. Required for the transport of mannose 6-phosphate receptors (MPR) from endosomes to the trans-Golgi network. This chain is Perilipin-3 (PLIN3), found in Pongo abelii (Sumatran orangutan).